A 141-amino-acid chain; its full sequence is Large ribosomal subunit protein uL11 (141 aa).

Belongs to the universal ribosomal protein uL11 family. Part of the ribosomal stalk of the 50S ribosomal subunit. Interacts with L10 and the large rRNA to form the base of the stalk. L10 forms an elongated spine to which L12 dimers bind in a sequential fashion forming a multimeric L10(L12)X complex. In terms of processing, one or more lysine residues are methylated.

Functionally, forms part of the ribosomal stalk which helps the ribosome interact with GTP-bound translation factors. The polypeptide is Large ribosomal subunit protein uL11 (Thermotoga neapolitana (strain ATCC 49049 / DSM 4359 / NBRC 107923 / NS-E)).